A 362-amino-acid polypeptide reads, in one-letter code: Protein RecA (362 aa).

77–84 (GPESSGKT) contributes to the ATP binding site.

The protein belongs to the RecA family.

It localises to the cytoplasm. Functionally, can catalyze the hydrolysis of ATP in the presence of single-stranded DNA, the ATP-dependent uptake of single-stranded DNA by duplex DNA, and the ATP-dependent hybridization of homologous single-stranded DNAs. It interacts with LexA causing its activation and leading to its autocatalytic cleavage. The polypeptide is Protein RecA (Rhizobium leguminosarum bv. trifolii (strain WSM2304)).